A 739-amino-acid chain; its full sequence is Poly(A) polymerase gamma (739 aa).

Position 2 is an N6-acetyllysine (lysine 2). Serine 23 is subject to Phosphoserine. ATP contacts are provided by residues 99-101 (FGS), threonine 108, 112-114 (DID), aspartate 166, lysine 227, tyrosine 236, and 245-246 (GV). Aspartate 112, aspartate 114, and aspartate 166 together coordinate Mg(2+). Residues 506-566 (KSLSDVSRSS…PTGEIERSSA (61 aa)) are disordered. 2 stretches are compositionally biased toward polar residues: residues 509–531 (SDVSRSSGGLQSKRSSLDSTCLD) and 538–556 (SGTPFNSPVSANKPSNPDS). Serine 524 is subject to Phosphoserine. Residues serine 602 and serine 651 each carry the phosphoserine modification. Threonine 657 is subject to Phosphothreonine. The span at 677–688 (SRAAEDRKRKPM) shows a compositional bias: basic and acidic residues. The interval 677–725 (SRAAEDRKRKPMDSIGGESMPIPTIDTARKKRLPSKELPDSSSPVPANN) is disordered. A Phosphoserine modification is found at serine 711.

This sequence belongs to the poly(A) polymerase family. Mg(2+) serves as cofactor. Requires Mn(2+) as cofactor.

The protein localises to the nucleus. It catalyses the reaction RNA(n) + ATP = RNA(n)-3'-adenine ribonucleotide + diphosphate. Responsible for the post-transcriptional adenylation of the 3'-terminal of mRNA precursors and several small RNAs including signal recognition particle (SRP) RNA, nuclear 7SK RNA, U2 small nuclear RNA, and ribosomal 5S RNA. The protein is Poly(A) polymerase gamma (Papolg) of Mus musculus (Mouse).